The primary structure comprises 515 residues: Calcium-dependent protein kinase 2 (515 aa).

Residues 1-51 form a disordered region; sequence MGNCCPGSGDAEPASSDASTGNGSSSFKAGASPSSAPAQNKPPAPIGPVLG. Glycine 2 carries N-myristoyl glycine lipidation. Low complexity predominate over residues 14 to 38; that stretch reads ASSDASTGNGSSSFKAGASPSSAPA. One can recognise a Protein kinase domain in the interval 61–319; that stretch reads YTIGKELGRG…AYEVLNHPWI (259 aa). Residues 67 to 75 and lysine 90 contribute to the ATP site; that span reads LGRGQFGVT. Aspartate 185 (proton acceptor) is an active-site residue. Positions 325-355 are autoinhibitory domain; it reads APDTPLDNAVMNRLKQFRAMNQFKKAALRVI. EF-hand domains follow at residues 362 to 397, 398 to 433, 434 to 469, and 473 to 504; these read EEIRGLKEMFKSMDSDNSGTITVDELRKGLSKQGTK, LTEAEVQQLMEAADADGNGTIDYDEFITATMHMNRM, DREEHLYTAFQYFDKDNSGCISKEELEQALREKGLL, and DIKDIISEVDADNDGRIDYSEFAAMMRKGNPE. 20 residues coordinate Ca(2+): aspartate 375, aspartate 377, serine 379, threonine 381, glutamate 386, aspartate 411, aspartate 413, asparagine 415, threonine 417, glutamate 422, aspartate 447, aspartate 449, serine 451, cysteine 453, glutamate 458, aspartate 482, aspartate 484, aspartate 486, arginine 488, and glutamate 493.

Belongs to the protein kinase superfamily. Ser/Thr protein kinase family. CDPK subfamily. As to expression, expressed in heading panicles, spikelets and mature pollen grains.

It localises to the membrane. The enzyme catalyses L-seryl-[protein] + ATP = O-phospho-L-seryl-[protein] + ADP + H(+). It carries out the reaction L-threonyl-[protein] + ATP = O-phospho-L-threonyl-[protein] + ADP + H(+). Its activity is regulated as follows. Activated by calcium. Autophosphorylation may play an important role in the regulation of the kinase activity. May play a role in signal transduction pathways that involve calcium as a second messenger. In Oryza sativa subsp. japonica (Rice), this protein is Calcium-dependent protein kinase 2.